Reading from the N-terminus, the 180-residue chain is NADH-quinone oxidoreductase subunit B (180 aa).

Positions 59, 60, 124, and 154 each coordinate [4Fe-4S] cluster.

The protein belongs to the complex I 20 kDa subunit family. NDH-1 is composed of 14 different subunits. Subunits NuoB, C, D, E, F, and G constitute the peripheral sector of the complex. [4Fe-4S] cluster is required as a cofactor.

It localises to the cell inner membrane. It carries out the reaction a quinone + NADH + 5 H(+)(in) = a quinol + NAD(+) + 4 H(+)(out). Its function is as follows. NDH-1 shuttles electrons from NADH, via FMN and iron-sulfur (Fe-S) centers, to quinones in the respiratory chain. The immediate electron acceptor for the enzyme in this species is believed to be ubiquinone. Couples the redox reaction to proton translocation (for every two electrons transferred, four hydrogen ions are translocated across the cytoplasmic membrane), and thus conserves the redox energy in a proton gradient. In Beijerinckia indica subsp. indica (strain ATCC 9039 / DSM 1715 / NCIMB 8712), this protein is NADH-quinone oxidoreductase subunit B.